Consider the following 435-residue polypeptide: ATP-dependent RNA helicase RhlB (435 aa).

The Q motif signature appears at 9–37 (QKFADLGLNPQVVEGLEKKGFEFCTPIQA). One can recognise a Helicase ATP-binding domain in the interval 40–219 (LPVLLSGQDI…FEHMHNPEHV (180 aa)). 53–60 (AQTGTGKT) contacts ATP. The DEAD box motif lies at 165-168 (DEAD). Residues 245 to 390 (ALLQTLIEEE…VSDYDSSALI (146 aa)) form the Helicase C-terminal domain. Residues 395–435 (APVRTPSARNQQRRTNTGGARSGDRKSNNRRPRQPRQHKEA) are disordered. The span at 401 to 413 (SARNQQRRTNTGG) shows a compositional bias: polar residues. Over residues 422 to 435 (NNRRPRQPRQHKEA) the composition is skewed to basic residues.

This sequence belongs to the DEAD box helicase family. RhlB subfamily. In terms of assembly, component of the RNA degradosome, which is a multiprotein complex involved in RNA processing and mRNA degradation.

The protein localises to the cytoplasm. It catalyses the reaction ATP + H2O = ADP + phosphate + H(+). In terms of biological role, DEAD-box RNA helicase involved in RNA degradation. Has RNA-dependent ATPase activity and unwinds double-stranded RNA. The protein is ATP-dependent RNA helicase RhlB of Vibrio vulnificus (strain YJ016).